Reading from the N-terminus, the 26-residue chain is Somatostatin-1 (26 aa).

A disulfide bridge links Cys-15 with Cys-26.

Belongs to the somatostatin family.

It localises to the secreted. In terms of biological role, somatostatin inhibits the release of somatotropin. This Amia calva (Bowfin) protein is Somatostatin-1 (sst1).